The chain runs to 158 residues: Ribonuclease H (158 aa).

An RNase H type-1 domain is found at 5–146 (MRKQIEIFTD…CDQLAKQGAE (142 aa)). Asp-14, Glu-52, Asp-74, and Asp-138 together coordinate Mg(2+).

This sequence belongs to the RNase H family. In terms of assembly, monomer. The cofactor is Mg(2+).

The protein resides in the cytoplasm. It carries out the reaction Endonucleolytic cleavage to 5'-phosphomonoester.. Its function is as follows. Endonuclease that specifically degrades the RNA of RNA-DNA hybrids. This chain is Ribonuclease H, found in Mannheimia succiniciproducens (strain KCTC 0769BP / MBEL55E).